A 599-amino-acid chain; its full sequence is Leishmanolysin (599 aa).

The first 39 residues, 1-39, serve as a signal peptide directing secretion; it reads MSVDSSSTHRHRSVAARLVRLAAAGAAVIAAVGTAAAWA. Residues 40–97 constitute a propeptide, activation peptide; the sequence is HAGAVQHRCIHDAMQARVRQSVARHHTAPGAVSAVGLPYVTLDTAAAADRRPGSAPTV. Intrachain disulfides connect cysteine 122–cysteine 139 and cysteine 188–cysteine 227. Histidine 261 contacts Zn(2+). The active site involves glutamate 262. Zn(2+) is bound at residue histidine 265. An N-linked (GlcNAc...) asparagine glycan is attached at asparagine 297. 7 cysteine pairs are disulfide-bonded: cysteine 311–cysteine 383, cysteine 390–cysteine 452, cysteine 403–cysteine 422, cysteine 412–cysteine 486, cysteine 463–cysteine 507, cysteine 512–cysteine 562, and cysteine 532–cysteine 555. Histidine 331 contacts Zn(2+). The N-linked (GlcNAc...) asparagine glycan is linked to asparagine 394. Asparagine 574 is lipidated: GPI-anchor amidated asparagine. Positions 575-599 are cleaved as a propeptide — removed in mature form; that stretch reads AAAGRRGPRAAATALLVAALLAVAL.

This sequence belongs to the peptidase M8 family. The cofactor is Zn(2+).

The protein resides in the cell membrane. The catalysed reaction is Preference for hydrophobic residues at P1 and P1' and basic residues at P2' and P3'. A model nonapeptide is cleaved at -Ala-Tyr-|-Leu-Lys-Lys-.. Its function is as follows. Has an integral role during the infection of macrophages in the mammalian host. The chain is Leishmanolysin (gp63) from Leishmania chagasi.